The following is a 146-amino-acid chain: MTFVSDLFAIALGGSIGAVLRYLITLTVVSAPLSGWLTLHGSVGTTLANLLGCCALGGLFQFSQALVASDWVATGWAASLAHPRTLLAVRIGVLGSLTTFSTLIGETAVFASQGRILASSMLLGINVIAGWCLFWAAAAVVRNWTS.

The next 4 membrane-spanning stretches (helical) occupy residues 8–28 (FAIA…TLTV), 47–67 (LANL…QALV), 91–111 (IGVL…AVFA), and 121–141 (MLLG…AAVV). 2 residues coordinate Na(+): G95 and T98.

The protein belongs to the fluoride channel Fluc/FEX (TC 1.A.43) family.

Its subcellular location is the cell inner membrane. The catalysed reaction is fluoride(in) = fluoride(out). Na(+) is not transported, but it plays an essential structural role and its presence is essential for fluoride channel function. Its function is as follows. Fluoride-specific ion channel. Important for reducing fluoride concentration in the cell, thus reducing its toxicity. This is Fluoride-specific ion channel FluC from Rhodopirellula baltica (strain DSM 10527 / NCIMB 13988 / SH1).